We begin with the raw amino-acid sequence, 433 residues long: Adenylosuccinate synthetase (433 aa).

GTP is bound by residues 11 to 17 and 39 to 41; these read GDEGKGK and GHT. Residue Asp-12 is the Proton acceptor of the active site. 2 residues coordinate Mg(2+): Asp-12 and Gly-39. IMP is bound by residues 12 to 15, 37 to 40, Thr-134, Arg-148, Asn-230, Thr-245, and Arg-309; these read DEGK and NAGH. His-40 serves as the catalytic Proton donor. 305–311 provides a ligand contact to substrate; the sequence is VTTGRKR. GTP is bound by residues Arg-311, 337–339, and 419–421; these read KLD and GTG.

Belongs to the adenylosuccinate synthetase family. In terms of assembly, homodimer. The cofactor is Mg(2+).

The protein localises to the cytoplasm. The enzyme catalyses IMP + L-aspartate + GTP = N(6)-(1,2-dicarboxyethyl)-AMP + GDP + phosphate + 2 H(+). It functions in the pathway purine metabolism; AMP biosynthesis via de novo pathway; AMP from IMP: step 1/2. In terms of biological role, plays an important role in the de novo pathway and in the salvage pathway of purine nucleotide biosynthesis. Catalyzes the first committed step in the biosynthesis of AMP from IMP. This Eremothecium gossypii (strain ATCC 10895 / CBS 109.51 / FGSC 9923 / NRRL Y-1056) (Yeast) protein is Adenylosuccinate synthetase.